Here is a 502-residue protein sequence, read N- to C-terminus: Hexokinase-2 (502 aa).

A helical membrane pass occupies residues 4–24 (VAVATTVVCSVAVCAAAALIV). One can recognise a Hexokinase domain in the interval 35-487 (ARVIEILKAF…SGVGAALLAA (453 aa)). The segment at 90 to 228 (SGDETGFFYA…GLDMLVAALV (139 aa)) is hexokinase small subdomain. ADP contacts are provided by G104, T105, and N106. D-glucose contacts are provided by T194, K195, N229, and D230. The segment at 229–476 (NDTIGTLAGG…ESVEVILSND (248 aa)) is hexokinase large subdomain. T253 is a binding site for ADP. The D-glucose site is built by N256, E284, and E315. G441 is a binding site for ADP.

It belongs to the hexokinase family. Highly expressed in siliques, at intermediate levels in roots and flowers, and at lower levels in stems, rosette and cauline leaves.

The protein resides in the mitochondrion outer membrane. The catalysed reaction is a D-hexose + ATP = a D-hexose 6-phosphate + ADP + H(+). The enzyme catalyses D-fructose + ATP = D-fructose 6-phosphate + ADP + H(+). It carries out the reaction D-glucose + ATP = D-glucose 6-phosphate + ADP + H(+). It functions in the pathway carbohydrate metabolism; hexose metabolism. The protein operates within carbohydrate degradation; glycolysis; D-glyceraldehyde 3-phosphate and glycerone phosphate from D-glucose: step 1/4. Its function is as follows. Fructose and glucose phosphorylating enzyme. May be involved in the phosphorylation of glucose during the export from mitochondrion to cytosol. Acts as a sugar sensor which may regulate sugar-dependent gene repression or activation. Mediates the effects of sugar on plant growth and development independently of its catalytic activity or the sugar metabolism. May regulate the execution of program cell death in plant cells. The polypeptide is Hexokinase-2 (HXK2) (Arabidopsis thaliana (Mouse-ear cress)).